Here is a 407-residue protein sequence, read N- to C-terminus: Proteasome-activating nucleotidase (407 aa).

A coiled-coil region spans residues 22–67; that stretch reads KEKTQIAELESKVLRLELKNKDINRENVQIKKENEILKRELDKLRI. ATP is bound by residues 192–197 and H331; that span reads GTGKTL. Positions 405 to 407 are docks into pockets in the proteasome alpha-ring to cause gate opening; it reads MYG.

This sequence belongs to the AAA ATPase family. In terms of assembly, homohexamer. The hexameric complex has a two-ring architecture resembling a top hat that caps the 20S proteasome core at one or both ends. Upon ATP-binding, the C-terminus of PAN interacts with the alpha-rings of the proteasome core by binding to the intersubunit pockets.

It localises to the cytoplasm. Its function is as follows. ATPase which is responsible for recognizing, binding, unfolding and translocation of substrate proteins into the archaeal 20S proteasome core particle. Is essential for opening the gate of the 20S proteasome via an interaction with its C-terminus, thereby allowing substrate entry and access to the site of proteolysis. Thus, the C-termini of the proteasomal ATPase function like a 'key in a lock' to induce gate opening and therefore regulate proteolysis. Unfolding activity requires energy from ATP hydrolysis, whereas ATP binding alone promotes ATPase-20S proteasome association which triggers gate opening, and supports translocation of unfolded substrates. The polypeptide is Proteasome-activating nucleotidase (Methanococcus maripaludis (strain DSM 14266 / JCM 13030 / NBRC 101832 / S2 / LL)).